The chain runs to 238 residues: Urease subunit alpha (238 aa).

Residues 1-102 (MKLTPKELDK…LVTVHTPIEA (102 aa)) are urease gamma. A urease beta region spans residues 103–238 (NGKLVPGELF…DDNYVKTIKE (136 aa)).

In the N-terminal section; belongs to the urease gamma subunit family. This sequence in the C-terminal section; belongs to the urease beta subunit family. As to quaternary structure, heterohexamer of 3 UreA (alpha) and 3 UreB (beta) subunits. Four heterohexamers assemble to form a 16 nm dodecameric complex.

The catalysed reaction is urea + 2 H2O + H(+) = hydrogencarbonate + 2 NH4(+). It participates in nitrogen metabolism; urea degradation; CO(2) and NH(3) from urea (urease route): step 1/1. This Helicobacter pylori (strain J99 / ATCC 700824) (Campylobacter pylori J99) protein is Urease subunit alpha.